The following is a 95-amino-acid chain: Aspartyl/glutamyl-tRNA(Asn/Gln) amidotransferase subunit C (95 aa).

The protein belongs to the GatC family. In terms of assembly, heterotrimer of A, B and C subunits.

The catalysed reaction is L-glutamyl-tRNA(Gln) + L-glutamine + ATP + H2O = L-glutaminyl-tRNA(Gln) + L-glutamate + ADP + phosphate + H(+). It catalyses the reaction L-aspartyl-tRNA(Asn) + L-glutamine + ATP + H2O = L-asparaginyl-tRNA(Asn) + L-glutamate + ADP + phosphate + 2 H(+). Functionally, allows the formation of correctly charged Asn-tRNA(Asn) or Gln-tRNA(Gln) through the transamidation of misacylated Asp-tRNA(Asn) or Glu-tRNA(Gln) in organisms which lack either or both of asparaginyl-tRNA or glutaminyl-tRNA synthetases. The reaction takes place in the presence of glutamine and ATP through an activated phospho-Asp-tRNA(Asn) or phospho-Glu-tRNA(Gln). In Thermodesulfovibrio yellowstonii (strain ATCC 51303 / DSM 11347 / YP87), this protein is Aspartyl/glutamyl-tRNA(Asn/Gln) amidotransferase subunit C.